The chain runs to 710 residues: Proline-rich receptor-like protein kinase PERK13 (710 aa).

The interval 1 to 229 (MSDSPTSSPP…SVPPPANSGG (229 aa)) is disordered. Topologically, residues 1–235 (MSDSPTSSPP…NSGGGYQGKT (235 aa)) are extracellular. 4 stretches are compositionally biased toward pro residues: residues 7–21 (SSPP…PPPD), 29–130 (APPP…PPPP), 137–151 (PPAP…PPAS), and 168–188 (ATSP…PNAP). An N-linked (GlcNAc...) asparagine glycan is attached at Asn191. Over residues 209–220 (SPSRGVPSSGNS) the composition is skewed to low complexity. Residues 236–256 (MAGFAIAGFAVIALMAVVFLV) form a helical membrane-spanning segment. At 257 to 710 (RRKKKRNIDA…ENRNFNNRRY (454 aa)) the chain is on the cytoplasmic side. Residues 289-334 (QNPTKGYSGPGGYNSQQQSNSGNSFGSQRGGGGYTRSGSAPDSAVM) are disordered. A compositionally biased stretch (low complexity) spans 301–315 (YNSQQQSNSGNSFGS). Thr342 is modified (phosphothreonine). One can recognise a Protein kinase domain in the interval 353 to 619 (FSKHNILGEG…RHSGPKRPRM (267 aa)). ATP-binding positions include 359–367 (LGEGGFGCV) and Lys381. Position 426 is a phosphotyrosine (Tyr426). Asp477 serves as the catalytic Proton acceptor. Ser510 is subject to Phosphoserine. Thr511 and Thr516 each carry phosphothreonine. At Tyr524 the chain carries Phosphotyrosine. Residues 676-710 (SGDYSVQDSRKGSNGASSEFTRNETENRNFNNRRY) form a disordered region.

It belongs to the protein kinase superfamily. Ser/Thr protein kinase family. Interacts with KIPK1 and KIPK2 (via its cytosolic domain). As to expression, mostly expressed in roots, especially in root hairs.

The protein localises to the cell membrane. It carries out the reaction L-seryl-[protein] + ATP = O-phospho-L-seryl-[protein] + ADP + H(+). The enzyme catalyses L-threonyl-[protein] + ATP = O-phospho-L-threonyl-[protein] + ADP + H(+). Negatively regulates root hair elongation. The sequence is that of Proline-rich receptor-like protein kinase PERK13 (PERK13) from Arabidopsis thaliana (Mouse-ear cress).